The following is a 391-amino-acid chain: Sister chromatid cohesion protein DCC1 (391 aa).

This sequence belongs to the DCC1 family. In terms of assembly, component of the ctf18-RFC complex which consists of ctf18, ctf8, dscc1 and the RFC complex.

It localises to the nucleus. Its function is as follows. Loads pcna onto primed templates regulating velocity, spacing and restart activity of replication forks. May couple DNA replication to sister chromatid cohesion. The sequence is that of Sister chromatid cohesion protein DCC1 (dscc1) from Danio rerio (Zebrafish).